Reading from the N-terminus, the 516-residue chain is Probable inorganic phosphate transporter 1-6 (516 aa).

At alanine 2 the chain carries N-acetylalanine. Residues alanine 2–alanine 25 are Cytoplasmic-facing. The chain crosses the membrane as a helical span at residues valine 26–isoleucine 46. The Extracellular segment spans residues threonine 47–serine 71. The helical transmembrane segment at alanine 72–leucine 92 threads the bilayer. Topologically, residues glycine 93–arginine 100 are cytoplasmic. The helical transmembrane segment at valine 101–glycine 121 threads the bilayer. Topologically, residues arginine 122–cysteine 132 are extracellular. Residues phenylalanine 133–methionine 153 form a helical membrane-spanning segment. At serine 154–arginine 162 the chain is on the cytoplasmic side. A helical transmembrane segment spans residues glycine 163 to valine 183. The Extracellular segment spans residues serine 184–alanine 212. The helical transmembrane segment at aspartate 213–tryptophan 233 threads the bilayer. The Cytoplasmic portion of the chain corresponds to arginine 234–arginine 293. The helical transmembrane segment at histidine 294–serine 314 threads the bilayer. At glutamine 315 to threonine 349 the chain is on the extracellular side. Residues isoleucine 350–methionine 370 traverse the membrane as a helical segment. Residues glycine 371–lysine 374 lie on the Cytoplasmic side of the membrane. Residues isoleucine 375–histidine 395 traverse the membrane as a helical segment. The Extracellular portion of the chain corresponds to histidine 396–arginine 403. A helical transmembrane segment spans residues isoleucine 404–threonine 424. At threonine 425 to histidine 442 the chain is on the cytoplasmic side. The helical transmembrane segment at glycine 443–leucine 463 threads the bilayer. Over valine 464–asparagine 471 the chain is Extracellular. A helical membrane pass occupies residues threonine 472–glutamate 492. The Cytoplasmic portion of the chain corresponds to threonine 493–valine 516.

This sequence belongs to the major facilitator superfamily. Phosphate:H(+) symporter (TC 2.A.1.9) family. Expressed in anthers, tapetumand mature pollen and, to a lower extent, in hydathodes and vascular tissues of cotyledons of flowering plants.

It localises to the membrane. Functionally, high-affinity transporter for external inorganic phosphate. This is Probable inorganic phosphate transporter 1-6 (PHT1-6) from Arabidopsis thaliana (Mouse-ear cress).